Here is a 242-residue protein sequence, read N- to C-terminus: 1-(5-phosphoribosyl)-5-[(5-phosphoribosylamino)methylideneamino] imidazole-4-carboxamide isomerase (242 aa).

Residue D8 is the Proton acceptor of the active site. Catalysis depends on D129, which acts as the Proton donor.

This sequence belongs to the HisA/HisF family.

The protein resides in the cytoplasm. It catalyses the reaction 1-(5-phospho-beta-D-ribosyl)-5-[(5-phospho-beta-D-ribosylamino)methylideneamino]imidazole-4-carboxamide = 5-[(5-phospho-1-deoxy-D-ribulos-1-ylimino)methylamino]-1-(5-phospho-beta-D-ribosyl)imidazole-4-carboxamide. It participates in amino-acid biosynthesis; L-histidine biosynthesis; L-histidine from 5-phospho-alpha-D-ribose 1-diphosphate: step 4/9. This is 1-(5-phosphoribosyl)-5-[(5-phosphoribosylamino)methylideneamino] imidazole-4-carboxamide isomerase from Erythrobacter litoralis (strain HTCC2594).